The primary structure comprises 859 residues: Ribose import ATP-binding protein RbsA 1 (859 aa).

The segment at 1–351 (MRASLENGDD…AARAPDEASE (351 aa)) is disordered. The unknown stretch occupies residues 1–353 (MRASLENGDD…RAPDEASEEA (353 aa)). A compositionally biased stretch (basic and acidic residues) spans 8–17 (GDDHDAHRLV). Residues 28-43 (RAARRRAFARARRGER) show a composition bias toward basic residues. 3 stretches are compositionally biased toward basic and acidic residues: residues 44 to 80 (RARGTAEDRHDVPGAEQPVLRDDAKGARRGGRVDRRA), 89 to 129 (RREQ…EEGG), and 137 to 167 (RERERPGRRVRRLEEFRRGRDVVRLPREGDR). The span at 168–179 (RRRRSRDPRRHP) shows a compositional bias: basic residues. 5 stretches are compositionally biased toward basic and acidic residues: residues 193-214 (GAREIPEREDRRRAERQAGARE), 239-250 (RLDGRAVRDRGV), 263-281 (AGGDRGDAEAELEVHRDVR), 288-301 (DSPRDRHRAREEVG), and 308-323 (DSGRREADRQGQREDV). 2 ABC transporter domains span residues 358–594 (LALT…VGRR) and 607–851 (RDAA…TSDV). An ATP-binding site is contributed by 390–397 (GENGAGKS).

Belongs to the ABC transporter superfamily. Ribose importer (TC 3.A.1.2.1) family. As to quaternary structure, the complex is composed of an ATP-binding protein (RbsA), two transmembrane proteins (RbsC) and a solute-binding protein (RbsB).

It localises to the cell inner membrane. The catalysed reaction is D-ribose(out) + ATP + H2O = D-ribose(in) + ADP + phosphate + H(+). Part of the ABC transporter complex RbsABC involved in ribose import. Responsible for energy coupling to the transport system. This chain is Ribose import ATP-binding protein RbsA 1, found in Burkholderia pseudomallei (strain 1710b).